Here is a 157-residue protein sequence, read N- to C-terminus: Lipoprotein signal peptidase (157 aa).

4 helical membrane passes run 10–30, 36–56, 58–78, and 84–104; these read LVFI…KHAI, YESL…FSLL, FLEG…FIFL, and LFKN…SNVL. Catalysis depends on residues aspartate 114 and aspartate 131. The chain crosses the membrane as a helical span at residues 122–142; the sequence is FDFAIFNFADVMIDVGVGVLL.

It belongs to the peptidase A8 family.

The protein localises to the cell inner membrane. The catalysed reaction is Release of signal peptides from bacterial membrane prolipoproteins. Hydrolyzes -Xaa-Yaa-Zaa-|-(S,diacylglyceryl)Cys-, in which Xaa is hydrophobic (preferably Leu), and Yaa (Ala or Ser) and Zaa (Gly or Ala) have small, neutral side chains.. It participates in protein modification; lipoprotein biosynthesis (signal peptide cleavage). This protein specifically catalyzes the removal of signal peptides from prolipoproteins. The sequence is that of Lipoprotein signal peptidase from Helicobacter pylori (strain P12).